The sequence spans 319 residues: ATP-dependent 6-phosphofructokinase (319 aa).

Residues G11, 72 to 73 (RS), and 102 to 105 (GDGS) each bind ATP. Position 103 (D103) interacts with Mg(2+). Residue 126 to 128 (TID) participates in substrate binding. Catalysis depends on D128, which acts as the Proton acceptor. An ADP-binding site is contributed by R155. Substrate contacts are provided by residues R163 and 170–172 (MGR). 186 to 188 (GAE) provides a ligand contact to ADP. Substrate contacts are provided by residues E223, R245, and 251 to 254 (HTQR).

It belongs to the phosphofructokinase type A (PFKA) family. ATP-dependent PFK group I subfamily. Prokaryotic clade 'B1' sub-subfamily. Homotetramer. Requires Mg(2+) as cofactor.

It localises to the cytoplasm. The catalysed reaction is beta-D-fructose 6-phosphate + ATP = beta-D-fructose 1,6-bisphosphate + ADP + H(+). The protein operates within carbohydrate degradation; glycolysis; D-glyceraldehyde 3-phosphate and glycerone phosphate from D-glucose: step 3/4. Its activity is regulated as follows. Allosterically activated by ADP and other diphosphonucleosides, and allosterically inhibited by phosphoenolpyruvate. Functionally, catalyzes the phosphorylation of D-fructose 6-phosphate to fructose 1,6-bisphosphate by ATP, the first committing step of glycolysis. This Sulfurimonas denitrificans (strain ATCC 33889 / DSM 1251) (Thiomicrospira denitrificans (strain ATCC 33889 / DSM 1251)) protein is ATP-dependent 6-phosphofructokinase.